Here is a 176-residue protein sequence, read N- to C-terminus: Large ribosomal subunit protein uL6 (176 aa).

Residues 151–170 (RPPEPYKGKGVRYADEQVRR) show a composition bias toward basic and acidic residues. The disordered stretch occupies residues 151-176 (RPPEPYKGKGVRYADEQVRRKEAKKK).

It belongs to the universal ribosomal protein uL6 family. As to quaternary structure, part of the 50S ribosomal subunit.

Functionally, this protein binds to the 23S rRNA, and is important in its secondary structure. It is located near the subunit interface in the base of the L7/L12 stalk, and near the tRNA binding site of the peptidyltransferase center. This is Large ribosomal subunit protein uL6 from Shewanella piezotolerans (strain WP3 / JCM 13877).